Reading from the N-terminus, the 452-residue chain is Scaffold protein ILK (452 aa).

The residue at position 1 (Met1) is an N-acetylmethionine. ANK repeat units follow at residues 2 to 30, 31 to 63, 64 to 96, 97 to 129, and 130 to 174; these read DDIF…LNQG, DDHG…INVM, NRGD…INAV, NEHG…VSIC, and NKYG…GTTR. The segment at 33–139 is interaction with LIMS1; that stretch reads HGFSPLHWAC…NKYGEMPVDK (107 aa). Thr173 is subject to Phosphothreonine. The segment at 180-212 is PH-like; mediates interaction with TGFB1I1; it reads GTLNKHSGIDFKQLNFLAKLNENHSGELWKGRW. Ser186 carries the post-translational modification Phosphoserine. Positions 193 to 446 constitute a Protein kinase domain; the sequence is LNFLAKLNEN…PKFDMIVPIL (254 aa). Asn200, Asn202, His203, and Ser204 together coordinate ATP. Position 246 is a phosphoserine (Ser246). His270, Met272, and Asn279 together coordinate ATP. Asp339 contacts Mg(2+). ATP is bound at residue Lys341. The short motif at 363–371 is the Nuclear localization signal element; it reads KKPEDTNRR. Lys426 is subject to N6-acetyllysine.

Belongs to the protein kinase superfamily. TKL Ser/Thr protein kinase family. As to quaternary structure, component of the heterotrimeric IPP (ILK-PINCH-PARVIN) complex composed of ILK, LIMS1/PINCH and PARVA; the complex binds to F-actin via the C-terminal tail of LIMS1 and the N-terminal region of PARVA, promoting F-actin filament bundling. Formation of the IPP complex is dependent on protein kinase C and precedes integrin-mediated cell adhesion and spreading. ILK also interacts with LIMS2/PINCH2 and with PARVB and PARVG which may substitute for LIMS1 and PARVA in the IPP complex; PARVA and PARVB compete for the same binding site. Interaction with PARVG promotes the establishment of cell polarity required for leukocyte migration. Interacts with the cytoplasmic domain of integrin ITGB1 and may also interact with integrins ITGB2, ITGB3 and/or ITGB5. Interacts probably also with TGFB1I1. Interacts (via ANK repeats) with EPHA1 (via SAM domain); stimulated by EFNA1 but independent of the kinase activity of EPHA1. Interacts with FERMT2. Interacts with LIMD2; leading to activate the protein kinase activity. Interacts with PXN/PAXILLIN (via LD motif 4). Interacts with CCDC25 (via cytoplasmic region); initiating the ILK-PARVB cascade to induce cytoskeleton rearrangement and directional migration of cells. Interacts with IQGAP1; the interaction is required for localization of IQGAP1 to the cell cortex. Phosphorylation by PAK1 modulates ILK subcellular location by promoting its nuclear export. In terms of tissue distribution, highly expressed in lung, heart, kidney, liver, brain, spleen and skeletal muscle. Weakly expressed in testis.

It is found in the cell junction. The protein localises to the focal adhesion. The protein resides in the cell membrane. Its subcellular location is the cytoplasm. It localises to the myofibril. It is found in the sarcomere. The protein localises to the cell projection. The protein resides in the lamellipodium. Its subcellular location is the nucleus. It localises to the cytoskeleton. It is found in the microtubule organizing center. The protein localises to the centrosome. The protein resides in the cell cortex. In terms of biological role, scaffold protein which mediates protein-protein interactions during a range of cellular events including focal adhesion assembly, cell adhesion and cell migration. Regulates integrin-mediated signal transduction by contributing to inside-out integrin activation. Recruits PARVA and LIMS1/PITCH to form the heterotrimeric IPP (ILK-PINCH-PARVIN) complex which binds to F-actin via the C-terminal tail of LIMS1 and the N-terminal region of PARVA, promoting F-actin filament bundling, a process required to generate force for actin cytoskeleton reorganization and subsequent dynamic cell adhesion events such as cell spreading and migration. Binding to PARVA promotes effective assembly of ILK into focal adhesions while PARVA-bound ILK can simultaneously engage integrin-beta cytoplasmic tails to mediate cell adhesion. Plays a role with PARVG in promoting the cell adhesion and spreading of leukocytes. Acts as an upstream effector of both AKT1/PKB and GSK3. Mediates trafficking of caveolae to the cell surface in an ITGB1-dependent manner by promoting the recruitment of IQGAP1 to the cell cortex which cooperates with its effector DIAPH1 to locally stabilize microtubules and allow stable insertion of caveolae into the plasma membrane. Required for the maintenance of mitotic spindle integrity by promoting phosphorylation of TACC3 by AURKA. Associates with chromatin and may act as a negative regulator of transcription when located in the nucleus. This chain is Scaffold protein ILK, found in Mus musculus (Mouse).